The chain runs to 201 residues: MLNQLRPALVLLVALTAITGLAYPLAVTGVAGALFPAKAAGSLIERDGRIVGSSLIGQSFTGECYFHGRPSATTAADPADASKTVAAPYNAANSAGSNLGPTSAALAERVKGDLAALKAENPGRPVPVDLVTTSGSGLDPDVSPEAALFQVPRIARARNLPEDRLRDLVAGQLQGRTLGLLGEPRVNVLALNLVLVDLAKR.

A helical membrane pass occupies residues 7–27; the sequence is PALVLLVALTAITGLAYPLAV.

The protein belongs to the KdpC family. The system is composed of three essential subunits: KdpA, KdpB and KdpC.

The protein localises to the cell inner membrane. Functionally, part of the high-affinity ATP-driven potassium transport (or Kdp) system, which catalyzes the hydrolysis of ATP coupled with the electrogenic transport of potassium into the cytoplasm. This subunit acts as a catalytic chaperone that increases the ATP-binding affinity of the ATP-hydrolyzing subunit KdpB by the formation of a transient KdpB/KdpC/ATP ternary complex. The polypeptide is Potassium-transporting ATPase KdpC subunit (Methylorubrum extorquens (strain CM4 / NCIMB 13688) (Methylobacterium extorquens)).